The chain runs to 162 residues: NADH-quinone oxidoreductase subunit I (162 aa).

2 4Fe-4S ferredoxin-type domains span residues 53-83 (LRRY…IEAE) and 93-122 (TRYD…EGPN). Cys-63, Cys-66, Cys-69, Cys-73, Cys-102, Cys-105, Cys-108, and Cys-112 together coordinate [4Fe-4S] cluster.

This sequence belongs to the complex I 23 kDa subunit family. NDH-1 is composed of 14 different subunits. Subunits NuoA, H, J, K, L, M, N constitute the membrane sector of the complex. [4Fe-4S] cluster serves as cofactor.

The protein resides in the cell inner membrane. It catalyses the reaction a quinone + NADH + 5 H(+)(in) = a quinol + NAD(+) + 4 H(+)(out). Its function is as follows. NDH-1 shuttles electrons from NADH, via FMN and iron-sulfur (Fe-S) centers, to quinones in the respiratory chain. The immediate electron acceptor for the enzyme in this species is believed to be ubiquinone. Couples the redox reaction to proton translocation (for every two electrons transferred, four hydrogen ions are translocated across the cytoplasmic membrane), and thus conserves the redox energy in a proton gradient. This chain is NADH-quinone oxidoreductase subunit I, found in Maricaulis maris (strain MCS10) (Caulobacter maris).